Consider the following 158-residue polypeptide: Cyclic pyranopterin monophosphate synthase (158 aa).

Substrate is bound by residues Leu-76 to His-78 and Met-114 to Glu-115. The active site involves Asp-129.

This sequence belongs to the MoaC family. Homohexamer; trimer of dimers.

It carries out the reaction (8S)-3',8-cyclo-7,8-dihydroguanosine 5'-triphosphate = cyclic pyranopterin phosphate + diphosphate. Its pathway is cofactor biosynthesis; molybdopterin biosynthesis. Its function is as follows. Catalyzes the conversion of (8S)-3',8-cyclo-7,8-dihydroguanosine 5'-triphosphate to cyclic pyranopterin monophosphate (cPMP). The chain is Cyclic pyranopterin monophosphate synthase from Shewanella piezotolerans (strain WP3 / JCM 13877).